The sequence spans 98 residues: Small ribosomal subunit protein uS19 (98 aa).

2 disordered regions span residues 1–30 (MARS…KKSV) and 78–98 (RTFH…PAKK). The span at 9 to 24 (PFADKHLTKKVEDANK) shows a compositional bias: basic and acidic residues.

This sequence belongs to the universal ribosomal protein uS19 family.

In terms of biological role, protein S19 forms a complex with S13 that binds strongly to the 16S ribosomal RNA. In Anaeromyxobacter dehalogenans (strain 2CP-C), this protein is Small ribosomal subunit protein uS19.